The primary structure comprises 101 residues: MTSKLAVALLAAFLLSAALCEGAVLPRSAKELRCECIKTYSKPFHPKFIKELRVIESGPHCANTEIIVKLSDGRELCLDPKEPWVQRVVEKFVKRAENQNP.

A signal peptide spans 1–22 (MTSKLAVALLAAFLLSAALCEG). Residue Arg27 is modified to Citrulline. 2 disulfides stabilise this stretch: Cys34–Cys61 and Cys36–Cys77.

This sequence belongs to the intercrine alpha (chemokine CxC) family. Homodimer. Interacts with TNFAIP6 (via Link domain); this interaction interferes with chemokine binding to glycosaminoglycans. Post-translationally, citrullination at Arg-27 prevents proteolysis, and dampens tissue inflammation, it also enhances leukocytosis, possibly through impaired chemokine clearance from the blood circulation.

Its subcellular location is the secreted. Functionally, chemotactic factor that mediates inflammatory response by attracting neutrophils, basophils, and T-cells to clear pathogens and protect the host from infection. Also plays an important role in neutrophil activation. Released in response to an inflammatory stimulus, exerts its effect by binding to the G-protein-coupled receptors CXCR1 and CXCR2, primarily found in neutrophils, monocytes and endothelial cells. G-protein heterotrimer (alpha, beta, gamma subunits) constitutively binds to CXCR1/CXCR2 receptor and activation by IL8 leads to beta and gamma subunits release from Galpha (GNAI2 in neutrophils) and activation of several downstream signaling pathways including PI3K and MAPK pathways. This Macaca mulatta (Rhesus macaque) protein is Interleukin-8 (CXCL8).